The chain runs to 128 residues: Early 4 ORF1 protein (128 aa).

Topologically, residues 1–26 are cytoplasmic; it reads MAAAVEALYVVLEREGAILPRQEGFS. Residues 27–47 form a helical membrane-spanning segment; the sequence is GVYVFFSPINFVIPPMGAVML. The Extracellular portion of the chain corresponds to 48 to 99; it reads SLRLRVCIPPGYFGRFLALTDVNQPDVFTESYIMTPDMTEELSVVLFNHGDQ. Residues 100 to 120 form a helical membrane-spanning segment; the sequence is FFYGHAGMAVVRLMLIRVVFP. Residues 121–128 are Cytoplasmic-facing; that stretch reads VVRQASNV. A PBZ domain binding motif motif is present at residues 125–128; it reads ASNV.

This sequence belongs to the adenoviridae E4-ORF1 family. May interact with host PDZ proteins through the PDZ domain binding motif (PBM), namely host DLG1, PATJ and TJP2.

Its subcellular location is the host membrane. In terms of biological role, may modulate tight-junctions functions of infected cells through interactions with PDZ proteins. E4 ORF1 has ben show for Adenovirus 9 to interact with protein involved in tight junction regulation. May play a role in mTOR activation by activating PI3-kinase, thus overriding cellular checkpoint for translation. This chain is Early 4 ORF1 protein, found in Human adenovirus C serotype 2 (HAdV-2).